Consider the following 870-residue polypeptide: DNA mismatch repair protein MutS (870 aa).

620-627 (GPNMAGKS) serves as a coordination point for ATP.

The protein belongs to the DNA mismatch repair MutS family.

Functionally, this protein is involved in the repair of mismatches in DNA. It is possible that it carries out the mismatch recognition step. This protein has a weak ATPase activity. The protein is DNA mismatch repair protein MutS of Syntrophotalea carbinolica (strain DSM 2380 / NBRC 103641 / GraBd1) (Pelobacter carbinolicus).